Reading from the N-terminus, the 119-residue chain is Large ribosomal subunit protein uL18 (119 aa).

The protein belongs to the universal ribosomal protein uL18 family. In terms of assembly, part of the 50S ribosomal subunit; part of the 5S rRNA/L5/L18/L25 subcomplex. Contacts the 5S and 23S rRNAs.

This is one of the proteins that bind and probably mediate the attachment of the 5S RNA into the large ribosomal subunit, where it forms part of the central protuberance. This is Large ribosomal subunit protein uL18 from Cereibacter sphaeroides (strain ATCC 17025 / ATH 2.4.3) (Rhodobacter sphaeroides).